A 270-amino-acid chain; its full sequence is DNA-directed RNA polymerase subunit Rpo3 (270 aa).

[3Fe-4S] cluster-binding residues include Cys-206, Cys-209, and Cys-212.

Belongs to the archaeal Rpo3/eukaryotic RPB3 RNA polymerase subunit family. In terms of assembly, part of the RNA polymerase complex. [3Fe-4S] cluster is required as a cofactor.

Its subcellular location is the cytoplasm. It carries out the reaction RNA(n) + a ribonucleoside 5'-triphosphate = RNA(n+1) + diphosphate. Its function is as follows. DNA-dependent RNA polymerase (RNAP) catalyzes the transcription of DNA into RNA using the four ribonucleoside triphosphates as substrates. In Methanosphaera stadtmanae (strain ATCC 43021 / DSM 3091 / JCM 11832 / MCB-3), this protein is DNA-directed RNA polymerase subunit Rpo3.